A 194-amino-acid polypeptide reads, in one-letter code: Aminodeoxychorismate/anthranilate synthase component 2 (194 aa).

Residues 1–194 (MILMIDNYDS…IETYRKEVIA (194 aa)) enclose the Glutamine amidotransferase type-1 domain. Residues Cys79, His168, and Glu170 contribute to the active site.

As to quaternary structure, monomer. Heterodimer consisting of two non-identical subunits: a glutamine amidotransferase subunit (PabA) and a aminodeoxychorismate synthase subunit (PabB).

It carries out the reaction chorismate + L-glutamine = anthranilate + pyruvate + L-glutamate + H(+). It catalyses the reaction chorismate + L-glutamine = 4-amino-4-deoxychorismate + L-glutamate. The protein operates within amino-acid biosynthesis; L-tryptophan biosynthesis; L-tryptophan from chorismate: step 1/5. Its pathway is cofactor biosynthesis; tetrahydrofolate biosynthesis; 4-aminobenzoate from chorismate: step 1/2. Functionally, part of a heterodimeric complex that catalyzes the two-step biosynthesis of 4-amino-4-deoxychorismate (ADC), a precursor of p-aminobenzoate (PABA) and tetrahydrofolate. In the first step, a glutamine amidotransferase (PabA) generates ammonia as a substrate that, along with chorismate, is used in the second step, catalyzed by aminodeoxychorismate synthase (PabB) to produce ADC. PabA converts glutamine into glutamate only in the presence of stoichiometric amounts of PabB. Also involved in the biosynthesis of anthranilate. Complements a glutamine amidotransferase-negative mutant. In Bacillus subtilis (strain 168), this protein is Aminodeoxychorismate/anthranilate synthase component 2.